A 317-amino-acid polypeptide reads, in one-letter code: Homoserine kinase (317 aa).

An ATP-binding site is contributed by 95 to 105; it reads PHSRGLGSSAA.

The protein belongs to the GHMP kinase family. Homoserine kinase subfamily.

The protein localises to the cytoplasm. It carries out the reaction L-homoserine + ATP = O-phospho-L-homoserine + ADP + H(+). Its pathway is amino-acid biosynthesis; L-threonine biosynthesis; L-threonine from L-aspartate: step 4/5. Its function is as follows. Catalyzes the ATP-dependent phosphorylation of L-homoserine to L-homoserine phosphate. In Mycolicibacterium smegmatis (strain ATCC 700084 / mc(2)155) (Mycobacterium smegmatis), this protein is Homoserine kinase.